Here is a 395-residue protein sequence, read N- to C-terminus: Proteinase-activated receptor 2 (395 aa).

Residues 1–25 form the signal peptide; sequence MRSPSAAWLLGGVLLLAASGSCNRT. Residues Asn-23 and Asn-29 are each glycosylated (N-linked (GlcNAc...) asparagine). Positions 26–34 are cleaved as a propeptide — removed for receptor activation; sequence VPGNKSKGR. Topologically, residues 35-69 are extracellular; that stretch reads SLIGNVDNSPVVAGRGVTVKPGFSVDEFSTSVLTG. A helical transmembrane segment spans residues 70–99; it reads KLTTVFLPVVYTIVFVVGLPSNGMALWVFL. Over 100–106 the chain is Cytoplasmic; sequence FRTKKKH. The chain crosses the membrane as a helical span at residues 107–135; that stretch reads PAVIYMANLALADLLSVTWFPLKIAYHIH. Residues 136–147 are Extracellular-facing; the sequence is GNNWIYGESLCK. Cys-146 and Cys-224 are disulfide-bonded. A helical transmembrane segment spans residues 148 to 175; sequence VLIGFFYGNMYCSILFMTCLSVQRYWVI. Topologically, residues 176–181 are cytoplasmic; it reads VNPMVH. The chain crosses the membrane as a helical span at residues 182–209; that stretch reads PKKQANIAIGVSLGIWLLILLLTIPLYV. Residues 210–233 lie on the Extracellular side of the membrane; it reads VKQTSYIRALNITTCHDVLPEEVL. A glycan (N-linked (GlcNAc...) asparagine) is linked at Asn-220. The chain crosses the membrane as a helical span at residues 234–267; it reads VGDMFNYFLSLAIGVFLFPAFLTASAYVLMIRTL. Topologically, residues 268–275 are cytoplasmic; that stretch reads QSSAMDES. The chain crosses the membrane as a helical span at residues 276–315; it reads SGKKRRRAIKLIVTVLAMYLICFTPSNLLLVVHYFLIKTR. Over 316 to 321 the chain is Extracellular; sequence GQSHVY. Residues 322 to 345 traverse the membrane as a helical segment; that stretch reads ALYIVALCLSTLNSCIDPFVYYFI. Residues 346–395 lie on the Cytoplasmic side of the membrane; sequence SQDFRDHAKNALLCRSVRTVKRMQVSLSSKKFSGKSSSYSSSSTSVKGSY. Residue Cys-359 is the site of S-palmitoyl cysteine attachment.

This sequence belongs to the G-protein coupled receptor 1 family. Interacts with TLR4, COPS5 and TMED2. Interacts with GNAQ, GNA11, GNA12, GNA13 and GNA14. A proteolytic cleavage generates a new N-terminus that functions as a tethered ligand. Activating serine proteases include trypsin, mast cell tryptase, coagulation factors VII and Xa, myeloblastin/PRTN3 and membrane-type serine protease 1/ST14. Proposed subsequent cleavage by serine proteases is leading to receptor deactivation and include neutrophil elastase and cathepsin G. At least in part, implicated proteases are also shown to activate the receptor; the glycosylation status of the receptor is thought to contribute to the difference. Post-translationally, N-glycosylated and sialylated. In terms of processing, multiple phosphorylated on serine and threonine residues in the cytoplasmic region upon receptor activation; required for receptor desensitization and recruitment of beta-arrestin. Monoubiquitinated by CBL at the plasma membrane and in early endosomes; not required for receptor endocytosis but for translocation to late endosomes or lysosomes. Deubiquitination involves STAMBP and USP8; required for lysosomal trafficking and receptor degradation.

Its subcellular location is the cell membrane. Its function is as follows. Receptor for trypsin and trypsin-like enzymes coupled to G proteins. Its function is mediated through the activation of several signaling pathways including phospholipase C (PLC), intracellular calcium, mitogen-activated protein kinase (MAPK), I-kappaB kinase/NF-kappaB and Rho. Can also be transactivated by cleaved F2R/PAR1. Involved in modulation of inflammatory responses and regulation of innate and adaptive immunity, and acts as a sensor for proteolytic enzymes generated during infection. Generally is promoting inflammation. Can signal synergistically with TLR4 and probably TLR2 in inflammatory responses and modulates TLR3 signaling. Has a protective role in establishing the endothelial barrier; the activity involves coagulation factor X. Regulates endothelial cell barrier integrity during neutrophil extravasation, probably following proteolytic cleavage by PRTN3. Proposed to have a bronchoprotective role in airway epithelium, but also shown to compromise the airway epithelial barrier by interrupting E-cadherin adhesion. Involved in the regulation of vascular tone; activation results in hypotension presumably mediated by vasodilation. Associates with a subset of G proteins alpha subunits such as GNAQ, GNA11, GNA14, GNA12 and GNA13, but probably not with G(o) alpha, G(i) subunit alpha-1 and G(i) subunit alpha-2. Believed to be a class B receptor which internalizes as a complex with arrestin and traffic with it to endosomal vesicles, presumably as desensitized receptor, for extended periods of time. Mediates inhibition of TNF-alpha stimulated JNK phosphorylation via coupling to GNAQ and GNA11; the function involves dissociation of RIPK1 and TRADD from TNFR1. Mediates phosphorylation of nuclear factor NF-kappa-B RELA subunit at 'Ser-536'; the function involves IKBKB and is predominantly independent of G proteins. Involved in cellular migration. Involved in cytoskeletal rearrangement and chemotaxis through beta-arrestin-promoted scaffolds; the function is independent of GNAQ and GNA11 and involves promotion of cofilin dephosphorylation and actin filament severing. Induces redistribution of COPS5 from the plasma membrane to the cytosol and activation of the JNK cascade is mediated by COPS5. Involved in the recruitment of leukocytes to the sites of inflammation and is the major PAR receptor capable of modulating eosinophil function such as pro-inflammatory cytokine secretion, superoxide production and degranulation. During inflammation promotes dendritic cell maturation, trafficking to the lymph nodes and subsequent T-cell activation. Involved in antimicrobial response of innate immune cells; activation enhances phagocytosis of Gram-positive and killing of Gram-negative bacteria. Acts synergistically with interferon-gamma in enhancing antiviral responses. Probably mediates activation of pro-inflammatory and pro-fibrotic responses in fibroblasts, triggered by coagulation factor Xa (F10). Probably mediates activation of barrier protective signaling responses in endothelial cells, triggered by coagulation factor Xa (F10). The protein is Proteinase-activated receptor 2 (F2RL1) of Bos taurus (Bovine).